Reading from the N-terminus, the 155-residue chain is Vasotocin-neurophysin VT 1 (155 aa).

Residues Met1–Ala20 form the signal peptide. A disulfide bond links Cys21 and Cys26. The residue at position 29 (Gly29) is a Glycine amide. Cystine bridges form between Cys41/Cys85, Cys44/Cys58, Cys52/Cys75, Cys59/Cys65, Cys92/Cys105, Cys99/Cys117, and Cys106/Cys111.

It belongs to the vasopressin/oxytocin family. Post-translationally, seven disulfide bonds are present in neurophysin.

Its subcellular location is the secreted. In terms of biological role, vasotocin is probably an antidiuretic hormone. In Oncorhynchus masou (Cherry salmon), this protein is Vasotocin-neurophysin VT 1.